A 214-amino-acid chain; its full sequence is MSTKLQDHFDKITKILSGFGVEGCISYGEITFSIRDQRDIHLILKKLKKEYLFEQLTDVTAVDYLTYGQSDWQVGKVVSQTGFSRGRQQDFKTAAVDNRFEIIYQLLSMANNVRIRVKCKLKDAQIILVDSVSDLWSSANWAEREVYDMFGIYFNNHPDLRRVLTDYGFVGHPLRKDFPQTGYVEMRYDENLGRVVYEPVEIDDRVNTPRVIRN.

This sequence belongs to the complex I 30 kDa subunit family. NDH-1 is composed of 14 different subunits. Subunits NuoB, C, D, E, F, and G constitute the peripheral sector of the complex.

It localises to the cell inner membrane. The catalysed reaction is a quinone + NADH + 5 H(+)(in) = a quinol + NAD(+) + 4 H(+)(out). Its function is as follows. NDH-1 shuttles electrons from NADH, via FMN and iron-sulfur (Fe-S) centers, to quinones in the respiratory chain. The immediate electron acceptor for the enzyme in this species is believed to be ubiquinone. Couples the redox reaction to proton translocation (for every two electrons transferred, four hydrogen ions are translocated across the cytoplasmic membrane), and thus conserves the redox energy in a proton gradient. This is NADH-quinone oxidoreductase subunit C from Francisella tularensis subsp. novicida (strain U112).